Reading from the N-terminus, the 479-residue chain is Aspartyl/glutamyl-tRNA(Asn/Gln) amidotransferase subunit B (479 aa).

Belongs to the GatB/GatE family. GatB subfamily. Heterotrimer of A, B and C subunits.

The catalysed reaction is L-glutamyl-tRNA(Gln) + L-glutamine + ATP + H2O = L-glutaminyl-tRNA(Gln) + L-glutamate + ADP + phosphate + H(+). It carries out the reaction L-aspartyl-tRNA(Asn) + L-glutamine + ATP + H2O = L-asparaginyl-tRNA(Asn) + L-glutamate + ADP + phosphate + 2 H(+). Functionally, allows the formation of correctly charged Asn-tRNA(Asn) or Gln-tRNA(Gln) through the transamidation of misacylated Asp-tRNA(Asn) or Glu-tRNA(Gln) in organisms which lack either or both of asparaginyl-tRNA or glutaminyl-tRNA synthetases. The reaction takes place in the presence of glutamine and ATP through an activated phospho-Asp-tRNA(Asn) or phospho-Glu-tRNA(Gln). This is Aspartyl/glutamyl-tRNA(Asn/Gln) amidotransferase subunit B from Streptococcus pyogenes serotype M1.